The sequence spans 83 residues: Small ribosomal subunit protein uS17 (83 aa).

It belongs to the universal ribosomal protein uS17 family. As to quaternary structure, part of the 30S ribosomal subunit.

One of the primary rRNA binding proteins, it binds specifically to the 5'-end of 16S ribosomal RNA. The chain is Small ribosomal subunit protein uS17 from Campylobacter hominis (strain ATCC BAA-381 / DSM 21671 / CCUG 45161 / LMG 19568 / NCTC 13146 / CH001A).